The primary structure comprises 396 residues: MPTDFLFTSESVTEGHPDKIADQISDGVLDAIIAKDPQARVAVETLVKTGLAIVAGEVTTNCYVDIPKLVRSTICRIGYTDSSMGYDGNTCGVMVAIEGQSQDIARGVDNKKDQGAGDQGMMFGFACDETPELMPAPIHYAHAITRRLADVRRKQHPWIRPDGKSQVTVEYRDGRPARIDAVVVSTQHSDEVSNKKIQEAIREDVIANALPKKLIDNKTKFFINPTGRLVAGGPMGDSGLTGRKIIVDTYGGMGRHGGGAFSGKDPSKVDRSAAYMGRHIAKTVVAAGLARRCEVQVSYAIGVAEPVSVMVETFGTATVPEERIALAVRKTFGLRPREITEYLNLLRPIYQKTAAYGHFGRTEKEFTWERVEEKKDALRDAAKSATPSGGRRLKAV.

His-16 contributes to the ATP binding site. Asp-18 is a Mg(2+) binding site. A K(+)-binding site is contributed by Glu-44. L-methionine is bound by residues Glu-57 and Gln-100. A flexible loop region spans residues 100–110 (QSQDIARGVDN). ATP contacts are provided by residues 162 to 164 (DGK), Asp-237, 243 to 244 (RK), Ala-260, and Lys-264. Asp-237 serves as a coordination point for L-methionine. Position 268 (Lys-268) interacts with L-methionine.

Belongs to the AdoMet synthase family. As to quaternary structure, homotetramer; dimer of dimers. It depends on Mg(2+) as a cofactor. The cofactor is K(+).

Its subcellular location is the cytoplasm. The catalysed reaction is L-methionine + ATP + H2O = S-adenosyl-L-methionine + phosphate + diphosphate. Its pathway is amino-acid biosynthesis; S-adenosyl-L-methionine biosynthesis; S-adenosyl-L-methionine from L-methionine: step 1/1. Its function is as follows. Catalyzes the formation of S-adenosylmethionine (AdoMet) from methionine and ATP. The overall synthetic reaction is composed of two sequential steps, AdoMet formation and the subsequent tripolyphosphate hydrolysis which occurs prior to release of AdoMet from the enzyme. In Myxococcus xanthus, this protein is S-adenosylmethionine synthase.